The following is a 1711-amino-acid chain: Nuclear pore complex protein Nup214 (1711 aa).

8 tandem repeats follow at residues 472-473 (FG), 486-487 (FG), 497-498 (FG), 511-512 (FG), 514-515 (FG), 535-536 (FG), 588-589 (TS), and 598-599 (SL). Positions 472–1703 (FGAAAAKAPA…NSNAQKPAFG (1232 aa)) are 45 X 2 AA repeats of F-G. Leucine-zipper stretches follow at residues 650–672 (LDDL…VQGL) and 767–788 (LTRL…KSKL). A disordered region spans residues 886 to 905 (KPATANKYTQAAVAPPSPPD). Residues 1009–1010 (FG) form repeat 9. Residues 1012–1081 (GSPAVAAPTP…NKSFGFGGFT (70 aa)) are disordered. 2 stretches are compositionally biased toward basic and acidic residues: residues 1037 to 1051 (TKPK…KEFK) and 1058 to 1072 (EESK…ETEN). Positions 1044 to 1711 (AAESKEFKAV…FGGSSFMNYR (668 aa)) are interaction with emb. 8 repeat units span residues 1075-1076 (FG), 1077-1078 (FG), 1097-1098 (FG), 1106-1107 (FG), 1135-1136 (FG), 1218-1219 (FG), 1229-1230 (FG), and 1240-1241 (FG). A compositionally biased stretch (polar residues) spans 1251–1261 (TSVTEANNKTD). A disordered region spans residues 1251 to 1270 (TSVTEANNKTDPISTTPSAI). Repeat copies occupy residues 1356 to 1357 (FG), 1388 to 1389 (FG), 1399 to 1400 (FG), 1434 to 1435 (FG), 1449 to 1450 (FG), 1458 to 1459 (FG), 1472 to 1473 (FG), 1481 to 1482 (FG), 1487 to 1488 (FG), 1507 to 1508 (FG), 1512 to 1513 (FG), 1539 to 1540 (FG), 1547 to 1548 (FG), 1562 to 1563 (FG), 1571 to 1572 (FG), 1584 to 1585 (FG), 1588 to 1589 (FG), 1601 to 1602 (FG), 1617 to 1618 (FG), 1623 to 1624 (FG), 1629 to 1630 (FG), 1635 to 1636 (FG), 1641 to 1642 (FG), 1647 to 1648 (FG), 1650 to 1651 (FG), 1662 to 1663 (FG), and 1686 to 1687 (FG). Disordered stretches follow at residues 1533–1552 (SPQA…SPAT) and 1557–1614 (SGGS…TTTP). Gly residues-rich tracts occupy residues 1560 to 1572 (SIFG…GGFG) and 1582 to 1595 (GGFG…GGGS). Low complexity predominate over residues 1596–1614 (VAQTGFGSPQAPQQQTTTP). Over residues 1688-1698 (NLAQTGNSNAQ) the composition is skewed to polar residues. A disordered region spans residues 1688–1711 (NLAQTGNSNAQKPAFGGSSFMNYR). Residues 1702-1703 (FG) form repeat 45.

As to quaternary structure, component of the nuclear pore complex. Interacts with mbo/Nup88 and (via C-terminus) with emb to attenuate emb-mediated protein export.

It is found in the nucleus. The protein resides in the nuclear pore complex. It localises to the nucleus membrane. In terms of biological role, part of the nuclear pore complex. Serves as a docking site in the receptor-mediated import of substrates across the nuclear pore complex including emb, RanGAP and phosphorylated Mad. Protects mbo/Nup88 from proteasomal degradation at the nuclear pore. Together with mbo/Nup88, sequesters emb in the cytoplasm and thereby attenuates nuclear export signal (NES)-mediated nuclear export. Together with mbo/Nup88, required for the nuclear import of the Rel family transcription factors dorsal (dl) and Dorsal-related immunity factor (Dif) and the activation of an immune response. In Drosophila melanogaster (Fruit fly), this protein is Nuclear pore complex protein Nup214.